The sequence spans 210 residues: Probable nicotinate-nucleotide adenylyltransferase (210 aa).

The protein belongs to the NadD family.

The enzyme catalyses nicotinate beta-D-ribonucleotide + ATP + H(+) = deamido-NAD(+) + diphosphate. The protein operates within cofactor biosynthesis; NAD(+) biosynthesis; deamido-NAD(+) from nicotinate D-ribonucleotide: step 1/1. Its function is as follows. Catalyzes the reversible adenylation of nicotinate mononucleotide (NaMN) to nicotinic acid adenine dinucleotide (NaAD). The protein is Probable nicotinate-nucleotide adenylyltransferase of Streptococcus pyogenes serotype M6 (strain ATCC BAA-946 / MGAS10394).